The sequence spans 195 residues: Translation machinery-associated protein 22 (195 aa).

The SUI1 domain occupies 94–165 (VLIKRIERNR…EAKEYIEKLL (72 aa)). The disordered stretch occupies residues 176–195 (EQVDEKKKKKATAPGATPAA).

The protein belongs to the DENR family. As to quaternary structure, interacts with the 40S ribosomal subunit.

The protein localises to the cytoplasm. The polypeptide is Translation machinery-associated protein 22 (TMA22) (Scheffersomyces stipitis (strain ATCC 58785 / CBS 6054 / NBRC 10063 / NRRL Y-11545) (Yeast)).